Consider the following 416-residue polypeptide: Serine hydroxymethyltransferase (416 aa).

(6S)-5,6,7,8-tetrahydrofolate is bound by residues leucine 121 and 125–127 (GHL). N6-(pyridoxal phosphate)lysine is present on lysine 229.

The protein belongs to the SHMT family. As to quaternary structure, homodimer. Pyridoxal 5'-phosphate serves as cofactor.

The protein localises to the cytoplasm. It catalyses the reaction (6R)-5,10-methylene-5,6,7,8-tetrahydrofolate + glycine + H2O = (6S)-5,6,7,8-tetrahydrofolate + L-serine. It participates in one-carbon metabolism; tetrahydrofolate interconversion. It functions in the pathway amino-acid biosynthesis; glycine biosynthesis; glycine from L-serine: step 1/1. Catalyzes the reversible interconversion of serine and glycine with tetrahydrofolate (THF) serving as the one-carbon carrier. This reaction serves as the major source of one-carbon groups required for the biosynthesis of purines, thymidylate, methionine, and other important biomolecules. Also exhibits THF-independent aldolase activity toward beta-hydroxyamino acids, producing glycine and aldehydes, via a retro-aldol mechanism. This is Serine hydroxymethyltransferase from Neisseria gonorrhoeae.